The chain runs to 406 residues: ESX-5 secretion system protein EccE5 (406 aa).

The next 2 helical transmembrane spans lie at 9–29 and 43–63; these read LALS…ILAV and VAWW…VVSY.

This sequence belongs to the EccE family. Part of the ESX-5 / type VII secretion system (T7SS), which is composed of cytosolic and membrane components. The ESX-5 membrane complex is composed of EccB5, EccC5, EccD5 and EccE5.

Its subcellular location is the cell inner membrane. Functionally, part of the ESX-5 specialized secretion system, which is responsible for the secretion of EsxN and a number of PE_PGRS and PPE proteins, including PPE41. The sequence is that of ESX-5 secretion system protein EccE5 from Mycobacterium tuberculosis (strain ATCC 25618 / H37Rv).